Reading from the N-terminus, the 136-residue chain is Protein PsiE homolog (136 aa).

Helical transmembrane passes span 15-35, 58-78, 82-102, and 108-128; these read AMQAVLNLALLCLGIILVVFL, VEGLVVYFLYFEFIALIVKYF, FHFPLRYFVYIGITAIVRLII, and PLAVLIYSAAILILVITLWLC.

Belongs to the PsiE family.

The protein resides in the cell inner membrane. This chain is Protein PsiE homolog, found in Klebsiella pneumoniae subsp. pneumoniae (strain ATCC 700721 / MGH 78578).